Here is a 99-residue protein sequence, read N- to C-terminus: MRSLTLAALLLCSLLLVFHTSAAAELEAQEGHLMIPGDTDTALETVDDERFFECTFECDIKKEGKPCKPKGCKCKDKDNKDHKKCSGGWRCKLKLCLKF.

The N-terminal stretch at 1–23 is a signal peptide; the sequence is MRSLTLAALLLCSLLLVFHTSAA. Positions 24–50 are excised as a propeptide; it reads AELEAQEGHLMIPGDTDTALETVDDER. Cystine bridges form between cysteine 54–cysteine 67, cysteine 58–cysteine 91, cysteine 72–cysteine 74, and cysteine 85–cysteine 96.

This sequence belongs to the neurotoxin 12 (Hwtx-2) family. 04 (lasiotoxin) subfamily. In terms of tissue distribution, expressed by the venom gland.

The protein resides in the secreted. Its function is as follows. Toxin that causes irreversible contractile paralysis into adult Aedes aegypti resulting in 100% mortality after 24 hours. The chain is U1-theraphotoxin-Lsp1a from Lasiodora sp. (strain IBSP 8539) (Brazilian salmon pink birdeater).